A 115-amino-acid chain; its full sequence is NAD(P)H-quinone oxidoreductase subunit M (115 aa).

Belongs to the complex I NdhM subunit family. As to quaternary structure, NDH-1 can be composed of about 15 different subunits; different subcomplexes with different compositions have been identified which probably have different functions.

It localises to the cellular thylakoid membrane. The catalysed reaction is a plastoquinone + NADH + (n+1) H(+)(in) = a plastoquinol + NAD(+) + n H(+)(out). The enzyme catalyses a plastoquinone + NADPH + (n+1) H(+)(in) = a plastoquinol + NADP(+) + n H(+)(out). NDH-1 shuttles electrons from an unknown electron donor, via FMN and iron-sulfur (Fe-S) centers, to quinones in the respiratory and/or the photosynthetic chain. The immediate electron acceptor for the enzyme in this species is believed to be plastoquinone. Couples the redox reaction to proton translocation, and thus conserves the redox energy in a proton gradient. Cyanobacterial NDH-1 also plays a role in inorganic carbon-concentration. This Prochlorococcus marinus (strain NATL1A) protein is NAD(P)H-quinone oxidoreductase subunit M.